The sequence spans 143 residues: Large ribosomal subunit protein uL11 (143 aa).

Belongs to the universal ribosomal protein uL11 family. As to quaternary structure, part of the ribosomal stalk of the 50S ribosomal subunit. Interacts with L10 and the large rRNA to form the base of the stalk. L10 forms an elongated spine to which L12 dimers bind in a sequential fashion forming a multimeric L10(L12)X complex. In terms of processing, one or more lysine residues are methylated.

In terms of biological role, forms part of the ribosomal stalk which helps the ribosome interact with GTP-bound translation factors. This is Large ribosomal subunit protein uL11 from Chromohalobacter salexigens (strain ATCC BAA-138 / DSM 3043 / CIP 106854 / NCIMB 13768 / 1H11).